The primary structure comprises 30 residues: L-amino-acid oxidase (30 aa).

The protein belongs to the flavin monoamine oxidase family. FIG1 subfamily. Monomer. This is in contrast with most of its orthologs, that are non-covalently linked homodimers. FAD is required as a cofactor. Post-translationally, N-glycosylated. As to expression, expressed by the venom gland.

It localises to the secreted. The enzyme catalyses an L-alpha-amino acid + O2 + H2O = a 2-oxocarboxylate + H2O2 + NH4(+). It carries out the reaction L-leucine + O2 + H2O = 4-methyl-2-oxopentanoate + H2O2 + NH4(+). It catalyses the reaction L-phenylalanine + O2 + H2O = 3-phenylpyruvate + H2O2 + NH4(+). The catalysed reaction is L-tryptophan + O2 + H2O = indole-3-pyruvate + H2O2 + NH4(+). The enzyme catalyses L-methionine + O2 + H2O = 4-methylsulfanyl-2-oxobutanoate + H2O2 + NH4(+). It carries out the reaction L-2-aminohexanoate + O2 + H2O = 2-oxohexanoate + H2O2 + NH4(+). It catalyses the reaction L-tyrosine + O2 + H2O = 3-(4-hydroxyphenyl)pyruvate + H2O2 + NH4(+). In terms of biological role, catalyzes an oxidative deamination of predominantly hydrophobic and aromatic L-amino acids, thus producing hydrogen peroxide that may contribute to the diverse toxic effects of this enzyme. Is highly active against L-Met, L-Leu, L-norleucine (L-2-aminohexanoate), L-Trp, L-Phe, moderately active against L-Tyr, and no active on L-Gly, L-Ala, L-Val, L-Pro, L-His, L-Lys, L-Arg, L-Asp, L-Asn, L-Gln, L-Glu, L-Ser, and L-Thr. Exhibits diverse biological activities, such as hemorrhage, hemolysis, edema, antibacterial and antiparasitic activities. In addition, this protein induces apoptosis. It also interacts with endothelial cells, and inhibits collagen- and ADP-induced platelet aggregation. L-LAAO family effects on platelets are controversial, since it either induces aggregation or inhibits agonist-induced aggregation. These different effects are probably due to different experimental conditions. This Bothrops leucurus (Whitetail lancehead) protein is L-amino-acid oxidase.